The chain runs to 234 residues: 2,3,4,5-tetrahydropyridine-2,6-dicarboxylate N-acetyltransferase (234 aa).

It belongs to the transferase hexapeptide repeat family. DapH subfamily.

The enzyme catalyses (S)-2,3,4,5-tetrahydrodipicolinate + acetyl-CoA + H2O = L-2-acetamido-6-oxoheptanedioate + CoA. Its pathway is amino-acid biosynthesis; L-lysine biosynthesis via DAP pathway; LL-2,6-diaminopimelate from (S)-tetrahydrodipicolinate (acetylase route): step 1/3. In terms of biological role, catalyzes the transfer of an acetyl group from acetyl-CoA to tetrahydrodipicolinate. The chain is 2,3,4,5-tetrahydropyridine-2,6-dicarboxylate N-acetyltransferase from Lacticaseibacillus casei (strain BL23) (Lactobacillus casei).